A 440-amino-acid chain; its full sequence is Transposon Ty1-BL Gag polyprotein (440 aa).

Composition is skewed to polar residues over residues 20–31 (SVTSKEVQTTQD), 46–55 (VSTQANSQQP), and 137–168 (VGTHLNTPSPESGNSFPDSSSAKSNMTSTNQH). 3 disordered regions span residues 20–84 (SVTS…QNGP), 137–173 (VGTHLNTPSPESGNSFPDSSSAKSNMTSTNQHVRPPP), and 350–424 (QQES…TTEP). An RNA-binding region spans residues 299–401 (NNGIPINNKV…NSQSRTARAH (103 aa)). Basic and acidic residues predominate over residues 363-372 (SPSDEKKDSR). Over residues 373–411 (TYTNTTKPKSITRNSQKPNNSQSRTARAHNVSTFNNSPG) the composition is skewed to polar residues.

Homotrimer.

Its subcellular location is the cytoplasm. Functionally, capsid protein (CA) is the structural component of the virus-like particle (VLP), forming the shell that encapsulates the retrotransposons dimeric RNA genome. The particles are assembled from trimer-clustered units and there are holes in the capsid shells that allow for the diffusion of macromolecules. CA also has nucleocapsid-like chaperone activity, promoting primer tRNA(i)-Met annealing to the multipartite primer-binding site (PBS), dimerization of Ty1 RNA and initiation of reverse transcription. The protein is Transposon Ty1-BL Gag polyprotein (TY1A-BL) of Saccharomyces cerevisiae (strain ATCC 204508 / S288c) (Baker's yeast).